Here is a 194-residue protein sequence, read N- to C-terminus: Peptidyl-tRNA hydrolase (194 aa).

Residue Y16 participates in tRNA binding. The active-site Proton acceptor is H21. 3 residues coordinate tRNA: F67, N69, and N115.

Belongs to the PTH family. In terms of assembly, monomer.

Its subcellular location is the cytoplasm. The enzyme catalyses an N-acyl-L-alpha-aminoacyl-tRNA + H2O = an N-acyl-L-amino acid + a tRNA + H(+). Hydrolyzes ribosome-free peptidyl-tRNAs (with 1 or more amino acids incorporated), which drop off the ribosome during protein synthesis, or as a result of ribosome stalling. Its function is as follows. Catalyzes the release of premature peptidyl moieties from peptidyl-tRNA molecules trapped in stalled 50S ribosomal subunits, and thus maintains levels of free tRNAs and 50S ribosomes. This Shigella boydii serotype 4 (strain Sb227) protein is Peptidyl-tRNA hydrolase.